Consider the following 154-residue polypeptide: Myoglobin (154 aa).

The region spanning 2 to 148 is the Globin domain; sequence GLSDGEWQSV…FRNDIAAKYK (147 aa). Residue Ser-4 is modified to Phosphoserine. His-65 lines the nitrite pocket. His-65 contributes to the O2 binding site. Phosphothreonine is present on Thr-68. His-94 lines the heme b pocket.

The protein belongs to the globin family. Monomeric.

The protein localises to the cytoplasm. It is found in the sarcoplasm. It catalyses the reaction Fe(III)-heme b-[protein] + nitric oxide + H2O = Fe(II)-heme b-[protein] + nitrite + 2 H(+). The catalysed reaction is H2O2 + AH2 = A + 2 H2O. Its function is as follows. Monomeric heme protein which primary function is to store oxygen and facilitate its diffusion within muscle tissues. Reversibly binds oxygen through a pentacoordinated heme iron and enables its timely and efficient release as needed during periods of heightened demand. Depending on the oxidative conditions of tissues and cells, and in addition to its ability to bind oxygen, it also has a nitrite reductase activity whereby it regulates the production of bioactive nitric oxide. Under stress conditions, like hypoxia and anoxia, it also protects cells against reactive oxygen species thanks to its pseudoperoxidase activity. In Perodicticus potto edwarsi (Potto), this protein is Myoglobin (MB).